The chain runs to 240 residues: MAAEQLNGYVLHRRAYRETSFLVNIFTLENGKVSAVVKGVRGSKSDKKSLLQPFQPLLIGVSGRSELKNLQQVESTGAMIRLAGQALYCALYLNEVLNRVLADEIPHPEIFVLYQQSMHALVAQTNFEPVLRSFELGLLDALGYGIDLTHDADTGQPVADNGYYRIVPELGCVYQGDIRLSGCYSGQSLLNVASENWDKDSLLAAKHITRTTLGELLGSKPLMSRELFKQTHFKSRGREL.

The protein belongs to the RecO family.

In terms of biological role, involved in DNA repair and RecF pathway recombination. This Pseudoalteromonas atlantica (strain T6c / ATCC BAA-1087) protein is DNA repair protein RecO.